The following is a 372-amino-acid chain: Alanine racemase (372 aa).

Lys-33 serves as the catalytic Proton acceptor; specific for D-alanine. Lys-33 carries the N6-(pyridoxal phosphate)lysine modification. A substrate-binding site is contributed by Arg-131. The active-site Proton acceptor; specific for L-alanine is the Tyr-261. Met-309 contributes to the substrate binding site.

Belongs to the alanine racemase family. Pyridoxal 5'-phosphate serves as cofactor.

It catalyses the reaction L-alanine = D-alanine. The protein operates within amino-acid biosynthesis; D-alanine biosynthesis; D-alanine from L-alanine: step 1/1. Functionally, catalyzes the interconversion of L-alanine and D-alanine. May also act on other amino acids. This is Alanine racemase (alr) from Salinispora arenicola (strain CNS-205).